The following is an 88-amino-acid chain: MPNIKSAKKRVRVTRKKTLRNKHVKTMVKTAIKKFELALQNEDVETAREELKNATKTIDKAVSKGVIHKNNAARKKSRLTAKFNNIAS.

Belongs to the bacterial ribosomal protein bS20 family.

Its function is as follows. Binds directly to 16S ribosomal RNA. The protein is Small ribosomal subunit protein bS20 of Natranaerobius thermophilus (strain ATCC BAA-1301 / DSM 18059 / JW/NM-WN-LF).